The chain runs to 258 residues: uncharacterized protein (258 aa).

This is an uncharacterized protein from Methanocaldococcus jannaschii (strain ATCC 43067 / DSM 2661 / JAL-1 / JCM 10045 / NBRC 100440) (Methanococcus jannaschii).